Here is a 521-residue protein sequence, read N- to C-terminus: Chromaffin granule amine transporter (521 aa).

Residues 1-21 are Cytoplasmic-facing; the sequence is MLQVVLGAPQRLLKEGRQSRK. The helical transmembrane segment at 22-42 threads the bilayer; it reads LVLVVVFVALLLDNMLLTVVV. The Lumenal, vesicle segment spans residues 43–135; the sequence is PIVPTFLYAT…IEFLEEENVR (93 aa). N-linked (GlcNAc...) asparagine glycans are attached at residues N58, N87, and N104. The chain crosses the membrane as a helical span at residues 136-155; sequence IGILFASKALMQLLVNPFVG. Residues 156 to 164 lie on the Cytoplasmic side of the membrane; the sequence is PLTNRIGYH. The chain crosses the membrane as a helical span at residues 165–185; that stretch reads IPMFVGFMIMFLSTLMFAFSG. The Lumenal, vesicle segment spans residues 186–194; sequence TYALLFVAR. A helical transmembrane segment spans residues 195–215; the sequence is TLQGIGSSFSSVAGLGMLASV. At 216–224 the chain is on the cytoplasmic side; the sequence is YTDNYERGR. The chain crosses the membrane as a helical span at residues 225 to 247; sequence AMGIALGGLALGLLVGAPFGSVM. The Lumenal, vesicle segment spans residues 248–253; the sequence is YEFVGK. The helical transmembrane segment at 254–276 threads the bilayer; the sequence is SSPFLILAFLALLDGALQLCILW. Topologically, residues 277–296 are cytoplasmic; the sequence is PSKVSPESAMGTSLLTLLKD. Residues 297 to 316 form a helical membrane-spanning segment; the sequence is PYILVAAGSICLANMGVAIL. At 317-332 the chain is on the lumenal, vesicle side; the sequence is EPTLPIWMMQTMCSPE. The chain crosses the membrane as a helical span at residues 333–357; that stretch reads WQLGLAFLPASVAYLIGTNLFGVLA. The Cytoplasmic portion of the chain corresponds to 358–362; the sequence is NKMGR. The chain crosses the membrane as a helical span at residues 363 to 383; the sequence is WLCSLVGMVAVGISLLCVPLA. The Lumenal, vesicle segment spans residues 384-394; the sequence is HNIFGLIGPNA. Residues 395–415 form a helical membrane-spanning segment; it reads GLGFAIGMVDSSLMPIMGYLV. The Cytoplasmic portion of the chain corresponds to 416 to 419; it reads DLRH. The helical transmembrane segment at 420 to 440 threads the bilayer; that stretch reads TSVYGSVYAIADVAFCVGFAI. Topologically, residues 441–445 are lumenal, vesicle; the sequence is GPSTG. A helical membrane pass occupies residues 446–467; that stretch reads GVIVQVIGFPWLMVIIGTINII. Topologically, residues 468-521 are cytoplasmic; sequence YAPLCCFLQNPPAKEEKRAILSQECPTETQMYTFQKPTKAFPLGENSDDPSSGE.

It belongs to the major facilitator superfamily. Vesicular transporter family. Adrenal gland.

Its subcellular location is the cytoplasmic vesicle. The protein localises to the secretory vesicle membrane. The protein resides in the secretory vesicle. It is found in the synaptic vesicle membrane. It carries out the reaction serotonin(in) + 2 H(+)(out) = serotonin(out) + 2 H(+)(in). It catalyses the reaction (R)-noradrenaline(in) + 2 H(+)(out) = (R)-noradrenaline(out) + 2 H(+)(in). The enzyme catalyses dopamine(in) + 2 H(+)(out) = dopamine(out) + 2 H(+)(in). With respect to regulation, strongly inhibited by reserpine, ketanserin and methamphetamine. Also inhibited weakly by tetrabenazine. In terms of biological role, electrogenic antiporter that exchanges one cationic monoamine with two intravesicular protons across the membrane of secretory and synaptic vesicles. Uses the electrochemical proton gradient established by the V-type proton-pump ATPase to accumulate high concentrations of monoamines inside the vesicles prior to their release via exocytosis. Transports catecholamines and indolamines with higher affinity for serotonin. Regulates the transvesicular monoaminergic gradient that determines the quantal size. Mediates presynaptic monoaminergic vesicle transport in the amygdala and prefrontal brain regions related with emotion processing in response to environmental stimuli. The polypeptide is Chromaffin granule amine transporter (Slc18a1) (Rattus norvegicus (Rat)).